Consider the following 88-residue polypeptide: Small ribosomal subunit protein uS15 (88 aa).

It belongs to the universal ribosomal protein uS15 family. As to quaternary structure, part of the 30S ribosomal subunit. Forms a bridge to the 50S subunit in the 70S ribosome, contacting the 23S rRNA.

Its function is as follows. One of the primary rRNA binding proteins, it binds directly to 16S rRNA where it helps nucleate assembly of the platform of the 30S subunit by binding and bridging several RNA helices of the 16S rRNA. In terms of biological role, forms an intersubunit bridge (bridge B4) with the 23S rRNA of the 50S subunit in the ribosome. The polypeptide is Small ribosomal subunit protein uS15 (Albidiferax ferrireducens (strain ATCC BAA-621 / DSM 15236 / T118) (Rhodoferax ferrireducens)).